The sequence spans 53 residues: Large ribosomal subunit protein eL40 (53 aa).

It belongs to the eukaryotic ribosomal protein eL40 family.

The protein is Large ribosomal subunit protein eL40 of Pyrobaculum islandicum (strain DSM 4184 / JCM 9189 / GEO3).